The chain runs to 276 residues: Large ribosomal subunit protein uL2 (276 aa).

Positions 218-276 (PYVRGSAMNPVDHPHGGGEGRAPIGRPAPSTPWGKPALGLKTRKKNKKSNKYIVRRRKK) are disordered. A compositionally biased stretch (basic residues) spans 258-276 (KTRKKNKKSNKYIVRRRKK).

Belongs to the universal ribosomal protein uL2 family. In terms of assembly, part of the 50S ribosomal subunit. Forms a bridge to the 30S subunit in the 70S ribosome.

In terms of biological role, one of the primary rRNA binding proteins. Required for association of the 30S and 50S subunits to form the 70S ribosome, for tRNA binding and peptide bond formation. It has been suggested to have peptidyltransferase activity; this is somewhat controversial. Makes several contacts with the 16S rRNA in the 70S ribosome. In Finegoldia magna (strain ATCC 29328 / DSM 20472 / WAL 2508) (Peptostreptococcus magnus), this protein is Large ribosomal subunit protein uL2.